We begin with the raw amino-acid sequence, 286 residues long: Pantothenate synthetase (286 aa).

An ATP-binding site is contributed by 30–37 (MGALHEGH). His37 acts as the Proton donor in catalysis. Gln61 contacts (R)-pantoate. Gln61 contributes to the beta-alanine binding site. 147–150 (GEKD) contacts ATP. Gln153 contributes to the (R)-pantoate binding site. ATP is bound by residues Val180 and 188–191 (LSSR).

It belongs to the pantothenate synthetase family. Homodimer.

Its subcellular location is the cytoplasm. The enzyme catalyses (R)-pantoate + beta-alanine + ATP = (R)-pantothenate + AMP + diphosphate + H(+). The protein operates within cofactor biosynthesis; (R)-pantothenate biosynthesis; (R)-pantothenate from (R)-pantoate and beta-alanine: step 1/1. In terms of biological role, catalyzes the condensation of pantoate with beta-alanine in an ATP-dependent reaction via a pantoyl-adenylate intermediate. The sequence is that of Pantothenate synthetase from Novosphingobium aromaticivorans (strain ATCC 700278 / DSM 12444 / CCUG 56034 / CIP 105152 / NBRC 16084 / F199).